We begin with the raw amino-acid sequence, 615 residues long: DNA mismatch repair protein MutL (615 aa).

The segment at 363 to 397 (FAEPAAREPVAPRYTPAPASGSRPAAPWPNAQPGY) is disordered. Low complexity predominate over residues 364–391 (AEPAAREPVAPRYTPAPASGSRPAAPWP).

It belongs to the DNA mismatch repair MutL/HexB family.

In terms of biological role, this protein is involved in the repair of mismatches in DNA. It is required for dam-dependent methyl-directed DNA mismatch repair. May act as a 'molecular matchmaker', a protein that promotes the formation of a stable complex between two or more DNA-binding proteins in an ATP-dependent manner without itself being part of a final effector complex. The protein is DNA mismatch repair protein MutL of Escherichia coli (strain ATCC 8739 / DSM 1576 / NBRC 3972 / NCIMB 8545 / WDCM 00012 / Crooks).